The chain runs to 161 residues: Nucleotide-binding protein PSEEN4469 (161 aa).

The protein belongs to the YajQ family.

Functionally, nucleotide-binding protein. This is Nucleotide-binding protein PSEEN4469 from Pseudomonas entomophila (strain L48).